The chain runs to 457 residues: Cystathionine beta-lyase, chloroplastic (457 aa).

The transit peptide at 1 to 51 (MFSRPFVTPVTIDLQVKSITAGNMWEGLGFYKPANSKSNQMICSKGFRLNC) directs the protein to the chloroplast. Residues Tyr-120, Arg-122, Gly-150, Met-151, Ser-268, and Thr-270 each contribute to the pyridoxal 5'-phosphate site. Residue Lys-271 is modified to N6-(pyridoxal phosphate)lysine.

This sequence belongs to the trans-sulfuration enzymes family. As to quaternary structure, forms homodimers. May form homotetramers from two homodimers. It depends on pyridoxal 5'-phosphate as a cofactor.

It localises to the plastid. The protein resides in the chloroplast. The enzyme catalyses L,L-cystathionine + H2O = L-homocysteine + pyruvate + NH4(+). It carries out the reaction an S-substituted L-cysteine + H2O = a thiol + pyruvate + NH4(+). Catalyzes the degradation of cystathionine. The polypeptide is Cystathionine beta-lyase, chloroplastic (Mimosa pudica (Sensitive plant)).